A 279-amino-acid chain; its full sequence is Shikimate dehydrogenase (NADP(+)) (279 aa).

Residues 20–22 (SRS) and Thr-67 contribute to the shikimate site. Catalysis depends on Lys-71, which acts as the Proton acceptor. An NADP(+)-binding site is contributed by Asp-83. Shikimate contacts are provided by Asn-92 and Asp-108. NADP(+) is bound by residues 134–138 (GAGGA) and Leu-223. Residue Tyr-225 coordinates shikimate. Gly-246 provides a ligand contact to NADP(+).

This sequence belongs to the shikimate dehydrogenase family. As to quaternary structure, homodimer.

It catalyses the reaction shikimate + NADP(+) = 3-dehydroshikimate + NADPH + H(+). It participates in metabolic intermediate biosynthesis; chorismate biosynthesis; chorismate from D-erythrose 4-phosphate and phosphoenolpyruvate: step 4/7. Involved in the biosynthesis of the chorismate, which leads to the biosynthesis of aromatic amino acids. Catalyzes the reversible NADPH linked reduction of 3-dehydroshikimate (DHSA) to yield shikimate (SA). This is Shikimate dehydrogenase (NADP(+)) from Cereibacter sphaeroides (strain ATCC 17025 / ATH 2.4.3) (Rhodobacter sphaeroides).